A 181-amino-acid polypeptide reads, in one-letter code: Oligoribonuclease (181 aa).

The region spanning 8 to 171 is the Exonuclease domain; it reads LIWIDLEMTG…DDIRESVAEL (164 aa). Y129 is an active-site residue.

Belongs to the oligoribonuclease family.

The protein resides in the cytoplasm. Its function is as follows. 3'-to-5' exoribonuclease specific for small oligoribonucleotides. This Klebsiella pneumoniae subsp. pneumoniae (strain ATCC 700721 / MGH 78578) protein is Oligoribonuclease.